Reading from the N-terminus, the 37-residue chain is MKVRASVKKICRNCKIIKRSGVVRVICVEPKHKQRQG.

The protein belongs to the bacterial ribosomal protein bL36 family.

This Shewanella woodyi (strain ATCC 51908 / MS32) protein is Large ribosomal subunit protein bL36.